Consider the following 439-residue polypeptide: Ribosomal protein uS12 methylthiotransferase RimO (439 aa).

Positions 3–113 (HKVGFVSLGC…VVNAVHQHLP (111 aa)) constitute an MTTase N-terminal domain. [4Fe-4S] cluster is bound by residues cysteine 12, cysteine 48, cysteine 77, cysteine 144, cysteine 148, and cysteine 151. The Radical SAM core domain maps to 130-367 (LTPRHYAYLK…MQVQAEISRN (238 aa)). A TRAM domain is found at 370 to 436 (KNKIGSTQTV…DYDLYGDLEY (67 aa)).

It belongs to the methylthiotransferase family. RimO subfamily. Requires [4Fe-4S] cluster as cofactor.

It localises to the cytoplasm. It carries out the reaction L-aspartate(89)-[ribosomal protein uS12]-hydrogen + (sulfur carrier)-SH + AH2 + 2 S-adenosyl-L-methionine = 3-methylsulfanyl-L-aspartate(89)-[ribosomal protein uS12]-hydrogen + (sulfur carrier)-H + 5'-deoxyadenosine + L-methionine + A + S-adenosyl-L-homocysteine + 2 H(+). Its function is as follows. Catalyzes the methylthiolation of an aspartic acid residue of ribosomal protein uS12. This chain is Ribosomal protein uS12 methylthiotransferase RimO, found in Legionella pneumophila (strain Paris).